A 244-amino-acid polypeptide reads, in one-letter code: NAD reductase coq12 (244 aa).

The disordered stretch occupies residues 131–158; it reads NPLMNSEKNSTSVEDLPGSNRTQQTSSH. The segment covering 132-158 has biased composition (polar residues); the sequence is PLMNSEKNSTSVEDLPGSNRTQQTSSH.

It localises to the mitochondrion. The enzyme catalyses a reduced flavin + NAD(+) = an oxidized flavin + NADH + 2 H(+). Functionally, NADH-dependent flavin reductase that acts in the coenzyme Q biosynthetic pathway. Required for synthesis of the p-hydroxybenzoic acid (PHB) precursor to form a quinone backbone. The protein is NAD reductase coq12 of Schizosaccharomyces pombe (strain 972 / ATCC 24843) (Fission yeast).